We begin with the raw amino-acid sequence, 81 residues long: Cytotoxin 8 (81 aa).

Positions 1-21 (MKTLLLTLVVVTIVCLDLGYT) are cleaved as a signal peptide. Disulfide bonds link Cys24/Cys42, Cys35/Cys59, Cys63/Cys74, and Cys75/Cys80.

The protein belongs to the three-finger toxin family. Short-chain subfamily. Type IA cytotoxin sub-subfamily. In terms of assembly, monomer in solution; Homodimer and oligomer in the presence of negatively charged lipids forming a pore with a size ranging between 20 and 30 Angstroms. Expressed by the venom gland.

The protein resides in the secreted. The protein localises to the target cell membrane. Functionally, shows cytolytic activity on many different cells by forming pore in lipid membranes. In vivo, increases heart rate or kills the animal by cardiac arrest. In addition, it binds to heparin with high affinity, interacts with Kv channel-interacting protein 1 (KCNIP1) in a calcium-independent manner, and binds to integrin alpha-V/beta-3 (ITGAV/ITGB3) with moderate affinity. This chain is Cytotoxin 8, found in Naja atra (Chinese cobra).